Here is a 140-residue protein sequence, read N- to C-terminus: ATP synthase epsilon chain (140 aa).

Belongs to the ATPase epsilon chain family. As to quaternary structure, F-type ATPases have 2 components, CF(1) - the catalytic core - and CF(0) - the membrane proton channel. CF(1) has five subunits: alpha(3), beta(3), gamma(1), delta(1), epsilon(1). CF(0) has three main subunits: a, b and c.

Its subcellular location is the cell inner membrane. Its function is as follows. Produces ATP from ADP in the presence of a proton gradient across the membrane. This chain is ATP synthase epsilon chain, found in Legionella pneumophila (strain Lens).